A 522-amino-acid polypeptide reads, in one-letter code: Secreted RxLR effector protein 105 (522 aa).

The signal sequence occupies residues 1–21; it reads MRGPCSVITALLVVASSQIAA. The RxLR-dEER motif lies at 48–63; the sequence is RYLRGSQHVLDSNEER.

The protein belongs to the RxLR effector family.

The protein localises to the secreted. It localises to the host nucleus. The protein resides in the host cytoplasm. Its function is as follows. Secreted effector that dos not suppress the host cell death induced by cell death-inducing proteins. This chain is Secreted RxLR effector protein 105, found in Plasmopara viticola (Downy mildew of grapevine).